A 263-amino-acid chain; its full sequence is Hydroxyethylthiazole kinase 1 (263 aa).

Met42 contacts substrate. The ATP site is built by Lys118 and Thr164. Gly191 lines the substrate pocket.

The protein belongs to the Thz kinase family. The cofactor is Mg(2+).

It carries out the reaction 5-(2-hydroxyethyl)-4-methylthiazole + ATP = 4-methyl-5-(2-phosphooxyethyl)-thiazole + ADP + H(+). Its pathway is cofactor biosynthesis; thiamine diphosphate biosynthesis; 4-methyl-5-(2-phosphoethyl)-thiazole from 5-(2-hydroxyethyl)-4-methylthiazole: step 1/1. Functionally, catalyzes the phosphorylation of the hydroxyl group of 4-methyl-5-beta-hydroxyethylthiazole (THZ). The protein is Hydroxyethylthiazole kinase 1 of Clostridium botulinum (strain Langeland / NCTC 10281 / Type F).